Consider the following 149-residue polypeptide: Oocyte-expressed protein homolog (149 aa).

The tract at residues Met1 to Glu22 is disordered. The KH; atypical domain maps to Pro49–Leu110.

It belongs to the KHDC1 family. In terms of assembly, component of the subcortical maternal complex (SCMC), at least composed of NLRP5, KHDC3L, OOEP, and TLE6 isoform 1. Within the complex, interacts with NLRP5, KHDC3L and TLE6 isoform 1. As part of the SCMC interacts with the SCMC-associated protein NLRP4F. The SCMC may facilitate translocation of its components between the nuclear and cytoplasmic compartments. Forms a scaffold complex with KHDC3L/FILIA, and interacts with BLM and TRIM25 at DNA replication forks.

It is found in the cytoplasm. Its subcellular location is the nucleus. Its function is as follows. Component of the subcortical maternal complex (SCMC), a multiprotein complex that plays a key role in early embryonic development. The SCMC complex is a structural constituent of cytoplasmic lattices, which consist in fibrous structures found in the cytoplasm of oocytes and preimplantation embryos. They are required to store maternal proteins critical for embryonic development, such as proteins that control epigenetic reprogramming of the preimplantation embryo, and prevent their degradation or activation. As part of the OOEP-KHDC3 scaffold, recruits BLM and TRIM25 to DNA replication forks, thereby promoting the ubiquitination of BLM by TRIM25, enhancing BLM retainment at replication forks and therefore promoting stalled replication fork restart. Positively regulates the homologous recombination-mediated DNA double-strand break (DSB) repair pathway by regulating ATM activation and RAD51 recruitment to DSBs in oocytes. Thereby contributes to oocyte survival and the resumption and completion of meiosis. The chain is Oocyte-expressed protein homolog from Homo sapiens (Human).